We begin with the raw amino-acid sequence, 274 residues long: Diaminopimelate epimerase (274 aa).

N11, Q44, and N64 together coordinate substrate. Catalysis depends on C73, which acts as the Proton donor. Substrate contacts are provided by residues 74–75, N157, N190, and 208–209; these read GN and ER. The active-site Proton acceptor is the C217. 218 to 219 is a substrate binding site; that stretch reads GS.

Belongs to the diaminopimelate epimerase family. In terms of assembly, homodimer.

The protein localises to the cytoplasm. It carries out the reaction (2S,6S)-2,6-diaminopimelate = meso-2,6-diaminopimelate. It functions in the pathway amino-acid biosynthesis; L-lysine biosynthesis via DAP pathway; DL-2,6-diaminopimelate from LL-2,6-diaminopimelate: step 1/1. Functionally, catalyzes the stereoinversion of LL-2,6-diaminopimelate (L,L-DAP) to meso-diaminopimelate (meso-DAP), a precursor of L-lysine and an essential component of the bacterial peptidoglycan. This chain is Diaminopimelate epimerase, found in Yersinia enterocolitica serotype O:8 / biotype 1B (strain NCTC 13174 / 8081).